A 528-amino-acid chain; its full sequence is Peptide chain release factor 3 (528 aa).

Residues 11–279 (NKRRTFAIIS…GIVEWAPKPL (269 aa)) form the tr-type G domain. Residues 20–27 (SHPDAGKT), 88–92 (DTPGH), and 142–145 (NKLD) each bind GTP.

Belongs to the TRAFAC class translation factor GTPase superfamily. Classic translation factor GTPase family. PrfC subfamily.

It is found in the cytoplasm. Increases the formation of ribosomal termination complexes and stimulates activities of RF-1 and RF-2. It binds guanine nucleotides and has strong preference for UGA stop codons. It may interact directly with the ribosome. The stimulation of RF-1 and RF-2 is significantly reduced by GTP and GDP, but not by GMP. The chain is Peptide chain release factor 3 from Shewanella sp. (strain W3-18-1).